The following is a 1155-amino-acid chain: DNA-directed RNA polymerase subunit beta (1155 aa).

This sequence belongs to the RNA polymerase beta chain family. In terms of assembly, the RNAP catalytic core consists of 2 alpha, 1 beta, 1 beta' and 1 omega subunit. When a sigma factor is associated with the core the holoenzyme is formed, which can initiate transcription.

The catalysed reaction is RNA(n) + a ribonucleoside 5'-triphosphate = RNA(n+1) + diphosphate. DNA-dependent RNA polymerase catalyzes the transcription of DNA into RNA using the four ribonucleoside triphosphates as substrates. The chain is DNA-directed RNA polymerase subunit beta from Thermobifida fusca (strain YX).